Here is a 160-residue protein sequence, read N- to C-terminus: Cytochrome b6-f complex subunit 4 (160 aa).

Helical transmembrane passes span 36-56, 95-115, and 131-151; these read LLYM…GLAV, LLGV…PFIE, and TVFL…CLPI.

Belongs to the cytochrome b family. PetD subfamily. In terms of assembly, the 4 large subunits of the cytochrome b6-f complex are cytochrome b6, subunit IV (17 kDa polypeptide, petD), cytochrome f and the Rieske protein, while the 4 small subunits are petG, petL, petM and petN. The complex functions as a dimer.

It localises to the plastid. Its subcellular location is the chloroplast thylakoid membrane. Its function is as follows. Component of the cytochrome b6-f complex, which mediates electron transfer between photosystem II (PSII) and photosystem I (PSI), cyclic electron flow around PSI, and state transitions. This chain is Cytochrome b6-f complex subunit 4, found in Tupiella akineta (Green alga).